Here is a 387-residue protein sequence, read N- to C-terminus: Phosphoglycerate kinase (387 aa).

Substrate is bound by residues 21–23 (DLN), Arg-36, 59–62 (HLGR), Arg-113, and Arg-146. ATP is bound by residues Lys-197, Glu-314, and 340–343 (GGDT).

The protein belongs to the phosphoglycerate kinase family. Monomer.

It localises to the cytoplasm. The enzyme catalyses (2R)-3-phosphoglycerate + ATP = (2R)-3-phospho-glyceroyl phosphate + ADP. It functions in the pathway carbohydrate degradation; glycolysis; pyruvate from D-glyceraldehyde 3-phosphate: step 2/5. This chain is Phosphoglycerate kinase, found in Pseudomonas putida (strain ATCC 47054 / DSM 6125 / CFBP 8728 / NCIMB 11950 / KT2440).